A 260-amino-acid polypeptide reads, in one-letter code: Thiazole synthase (260 aa).

Catalysis depends on Lys-102, which acts as the Schiff-base intermediate with DXP. 1-deoxy-D-xylulose 5-phosphate contacts are provided by residues Gly-163, 189–190 (AG), and 211–212 (NT).

The protein belongs to the ThiG family. In terms of assembly, homotetramer. Forms heterodimers with either ThiH or ThiS.

Its subcellular location is the cytoplasm. The catalysed reaction is [ThiS sulfur-carrier protein]-C-terminal-Gly-aminoethanethioate + 2-iminoacetate + 1-deoxy-D-xylulose 5-phosphate = [ThiS sulfur-carrier protein]-C-terminal Gly-Gly + 2-[(2R,5Z)-2-carboxy-4-methylthiazol-5(2H)-ylidene]ethyl phosphate + 2 H2O + H(+). The protein operates within cofactor biosynthesis; thiamine diphosphate biosynthesis. In terms of biological role, catalyzes the rearrangement of 1-deoxy-D-xylulose 5-phosphate (DXP) to produce the thiazole phosphate moiety of thiamine. Sulfur is provided by the thiocarboxylate moiety of the carrier protein ThiS. In vitro, sulfur can be provided by H(2)S. This Geotalea uraniireducens (strain Rf4) (Geobacter uraniireducens) protein is Thiazole synthase.